Consider the following 364-residue polypeptide: Chorismate synthase (364 aa).

The disordered stretch occupies residues 41–60; it reads MQHDLDRRRPGTSRYTTARR. R48 and R54 together coordinate NADP(+). Residues 125 to 127, 238 to 239, G278, 293 to 297, and R319 contribute to the FMN site; these read RSS, NA, and KPTSS.

It belongs to the chorismate synthase family. In terms of assembly, homotetramer. Requires FMNH2 as cofactor.

It carries out the reaction 5-O-(1-carboxyvinyl)-3-phosphoshikimate = chorismate + phosphate. It participates in metabolic intermediate biosynthesis; chorismate biosynthesis; chorismate from D-erythrose 4-phosphate and phosphoenolpyruvate: step 7/7. Its function is as follows. Catalyzes the anti-1,4-elimination of the C-3 phosphate and the C-6 proR hydrogen from 5-enolpyruvylshikimate-3-phosphate (EPSP) to yield chorismate, which is the branch point compound that serves as the starting substrate for the three terminal pathways of aromatic amino acid biosynthesis. This reaction introduces a second double bond into the aromatic ring system. This chain is Chorismate synthase, found in Shewanella baltica (strain OS223).